Reading from the N-terminus, the 407-residue chain is Putative nickel insertion protein (407 aa).

Belongs to the LarC family.

The protein is Putative nickel insertion protein of Gloeothece citriformis (strain PCC 7424) (Cyanothece sp. (strain PCC 7424)).